The primary structure comprises 489 residues: Inactive receptor-like serine/threonine-protein kinase At2g40270 (489 aa).

A signal peptide spans 1–23 (MLFKMRSFVAFVLLLSWFGSCCS). At 24–139 (LKDQAVDFLK…PRNSHSSVPL (116 aa)) the chain is on the extracellular side. The disordered stretch occupies residues 67 to 130 (KDLPSRKDRK…SAPLANSPIP (64 aa)). Residues 81 to 90 (AATTTPSSSP) show a composition bias toward low complexity. Positions 99-116 (TKASTVSEPQKRSSTQDV) are enriched in polar residues. Residues 117-130 (SPSPSAPLANSPIP) are compositionally biased toward low complexity. Residues 140–160 (VVGCVGGAFFLLLVATGLYFF) traverse the membrane as a helical segment. The Cytoplasmic portion of the chain corresponds to 161–489 (TSKAGKTVNP…WAELEVLSTA (329 aa)). One can recognise a Protein kinase domain in the interval 200–460 (EDFSNVIGSC…PTMQEVTGWL (261 aa)).

The protein belongs to the protein kinase superfamily. Ser/Thr protein kinase family.

It localises to the cell membrane. The protein is Inactive receptor-like serine/threonine-protein kinase At2g40270 of Arabidopsis thaliana (Mouse-ear cress).